Reading from the N-terminus, the 421-residue chain is UDP-N-acetylglucosamine 1-carboxyvinyltransferase (421 aa).

Residue 22–23 (KN) participates in phosphoenolpyruvate binding. UDP-N-acetyl-alpha-D-glucosamine is bound at residue Arg91. Cys115 (proton donor) is an active-site residue. 2-(S-cysteinyl)pyruvic acid O-phosphothioketal is present on Cys115. UDP-N-acetyl-alpha-D-glucosamine is bound by residues 120-124 (RPVDL), 160-163 (KVSV), Asp305, and Ile327.

Belongs to the EPSP synthase family. MurA subfamily.

Its subcellular location is the cytoplasm. It carries out the reaction phosphoenolpyruvate + UDP-N-acetyl-alpha-D-glucosamine = UDP-N-acetyl-3-O-(1-carboxyvinyl)-alpha-D-glucosamine + phosphate. The protein operates within cell wall biogenesis; peptidoglycan biosynthesis. Its function is as follows. Cell wall formation. Adds enolpyruvyl to UDP-N-acetylglucosamine. This chain is UDP-N-acetylglucosamine 1-carboxyvinyltransferase, found in Photorhabdus laumondii subsp. laumondii (strain DSM 15139 / CIP 105565 / TT01) (Photorhabdus luminescens subsp. laumondii).